A 323-amino-acid polypeptide reads, in one-letter code: ATP synthase gamma chain (323 aa).

Belongs to the ATPase gamma chain family. As to quaternary structure, F-type ATPases have 2 components, CF(1) - the catalytic core - and CF(0) - the membrane proton channel. CF(1) has five subunits: alpha(3), beta(3), gamma(1), delta(1), epsilon(1). CF(0) has three main subunits: a, b and c.

The protein localises to the cell inner membrane. Functionally, produces ATP from ADP in the presence of a proton gradient across the membrane. The gamma chain is believed to be important in regulating ATPase activity and the flow of protons through the CF(0) complex. The sequence is that of ATP synthase gamma chain from Rickettsia peacockii (strain Rustic).